The chain runs to 631 residues: Shootin-1 (631 aa).

The residue at position 1 (M1) is an N-acetylmethionine. 2 positions are modified to phosphoserine: S3 and S4. Residues 7–353 (EKQLQLITSL…RVNQSENSVP (347 aa)) are a coiled coil. Position 101 is a phosphoserine; by PAK1 (S101). S249 carries the post-translational modification Phosphoserine. The tract at residues 343–511 (KRVNQSENSV…SESKSMPVLG (169 aa)) is disordered. Pro residues predominate over residues 352–369 (VPPPPPPPPPLPPPPPNP). S375 bears the Phosphoserine mark. Residues 403-418 (TDLKRQAVEEMMDRIK) show a composition bias toward basic and acidic residues. Over residues 456 to 465 (LNKSTSSRSL) the composition is skewed to polar residues. Position 473 is a phosphoserine (S473). T487 is subject to Phosphothreonine. Residues 490 to 505 (ADSSSPTGILATSESK) are compositionally biased toward polar residues. S494 bears the Phosphoserine mark. A Phosphothreonine modification is found at T496. Phosphoserine is present on residues S506, S515, S532, and S534. 2 disordered regions span residues 524-566 (KTLE…IGCR) and 579-631 (VVVL…SSNC). A Phosphothreonine modification is found at T537. Residues 550–561 (CTSSKVTFQPPS) show a composition bias toward polar residues. Residues 590–631 (PQTKDQVAEKDPTQHKEDEGEIQPENKEDSIENVRETDSSNC) are compositionally biased toward basic and acidic residues.

It belongs to the shootin family. Interacts with L1CAM; this interaction occurs in axonal growth cones. Interacts with actin filament retrograde flow; this interaction is enhanced in a netrin-1- and PAK1-dependent manner and promotes F-actin-substrate coupling and concomitant formation of traction forces at axonal growth cones. Interacts with RUFY3. Interacts with PFN2. Interacts (via N-terminus) with KIF20B; this interaction is direct and promotes the association of SHTN1 to microtubules in primary neurons. Associates with microtubule. Phosphorylated on Ser-101 and Ser-249 by PAK1 through a CDC42- and RAC1-dependent signaling pathway, which enhances its association with F-actin retrograde flow in filopodia and lamellipodia of axonal growth cones. Phosphorylation on Ser-101 and Ser-249 is increased by netrin-1.

The protein resides in the perikaryon. It is found in the cell projection. The protein localises to the axon. Its subcellular location is the growth cone. It localises to the cytoplasm. The protein resides in the cytoskeleton. It is found in the filopodium. The protein localises to the lamellipodium. In terms of biological role, involved in the generation of internal asymmetric signals required for neuronal polarization and neurite outgrowth. Mediates netrin-1-induced F-actin-substrate coupling or 'clutch engagement' within the axon growth cone through activation of CDC42, RAC1 and PAK1-dependent signaling pathway, thereby converting the F-actin retrograde flow into traction forces, concomitantly with filopodium extension and axon outgrowth. Plays a role in cytoskeletal organization by regulating the subcellular localization of phosphoinositide 3-kinase (PI3K) activity at the axonal growth cone. Also plays a role in regenerative neurite outgrowth. In the developing cortex, cooperates with KIF20B to promote both the transition from the multipolar to the bipolar stage and the radial migration of cortical neurons from the ventricular zone toward the superficial layer of the neocortex. Involved in the accumulation of phosphatidylinositol 3,4,5-trisphosphate (PIP3) in the growth cone of primary hippocampal neurons. In Homo sapiens (Human), this protein is Shootin-1.